Consider the following 89-residue polypeptide: Small ribosomal subunit protein uS15 (89 aa).

The span at 1–20 shows a compositional bias: basic and acidic residues; the sequence is MSITAERKAELIKTHARGEA. The tract at residues 1-24 is disordered; it reads MSITAERKAELIKTHARGEADTGS.

This sequence belongs to the universal ribosomal protein uS15 family. As to quaternary structure, part of the 30S ribosomal subunit. Forms a bridge to the 50S subunit in the 70S ribosome, contacting the 23S rRNA.

In terms of biological role, one of the primary rRNA binding proteins, it binds directly to 16S rRNA where it helps nucleate assembly of the platform of the 30S subunit by binding and bridging several RNA helices of the 16S rRNA. Forms an intersubunit bridge (bridge B4) with the 23S rRNA of the 50S subunit in the ribosome. This is Small ribosomal subunit protein uS15 from Phenylobacterium zucineum (strain HLK1).